Consider the following 206-residue polypeptide: Small ribosomal subunit protein uS4 (206 aa).

In terms of domain architecture, S4 RNA-binding spans 93–153 (TRLDALVLRA…PKSQTMVPFQ (61 aa)).

The protein belongs to the universal ribosomal protein uS4 family. Part of the 30S ribosomal subunit. Contacts protein S5. The interaction surface between S4 and S5 is involved in control of translational fidelity.

One of the primary rRNA binding proteins, it binds directly to 16S rRNA where it nucleates assembly of the body of the 30S subunit. Its function is as follows. With S5 and S12 plays an important role in translational accuracy. The protein is Small ribosomal subunit protein uS4 of Bifidobacterium animalis subsp. lactis (strain AD011).